Consider the following 570-residue polypeptide: Proline--tRNA ligase (570 aa).

It belongs to the class-II aminoacyl-tRNA synthetase family. ProS type 1 subfamily. In terms of assembly, homodimer.

Its subcellular location is the cytoplasm. It carries out the reaction tRNA(Pro) + L-proline + ATP = L-prolyl-tRNA(Pro) + AMP + diphosphate. Its function is as follows. Catalyzes the attachment of proline to tRNA(Pro) in a two-step reaction: proline is first activated by ATP to form Pro-AMP and then transferred to the acceptor end of tRNA(Pro). As ProRS can inadvertently accommodate and process non-cognate amino acids such as alanine and cysteine, to avoid such errors it has two additional distinct editing activities against alanine. One activity is designated as 'pretransfer' editing and involves the tRNA(Pro)-independent hydrolysis of activated Ala-AMP. The other activity is designated 'posttransfer' editing and involves deacylation of mischarged Ala-tRNA(Pro). The misacylated Cys-tRNA(Pro) is not edited by ProRS. The sequence is that of Proline--tRNA ligase from Clostridium perfringens (strain SM101 / Type A).